The sequence spans 446 residues: Argininosuccinate lyase (446 aa).

Belongs to the lyase 1 family. Argininosuccinate lyase subfamily.

The protein localises to the cytoplasm. It carries out the reaction 2-(N(omega)-L-arginino)succinate = fumarate + L-arginine. It functions in the pathway amino-acid biosynthesis; L-arginine biosynthesis; L-arginine from L-ornithine and carbamoyl phosphate: step 3/3. In Phocaeicola vulgatus (strain ATCC 8482 / DSM 1447 / JCM 5826 / CCUG 4940 / NBRC 14291 / NCTC 11154) (Bacteroides vulgatus), this protein is Argininosuccinate lyase.